A 440-amino-acid chain; its full sequence is D-serine dehydratase (440 aa).

The residue at position 116 (K116) is an N6-(pyridoxal phosphate)lysine.

It belongs to the serine/threonine dehydratase family. DsdA subfamily. Monomer. The cofactor is pyridoxal 5'-phosphate.

The enzyme catalyses D-serine = pyruvate + NH4(+). This is D-serine dehydratase from Salmonella dublin (strain CT_02021853).